The sequence spans 258 residues: uncharacterized protein (258 aa).

7 consecutive transmembrane segments (helical) span residues 8–28 (VFLA…IVWF), 38–58 (VFFI…GGVH), 70–90 (EAMQ…GIFE), 121–141 (LEAI…AFAI), 176–196 (LGGI…LLVL), 204–224 (PLFL…AVLY), and 231–251 (HAAA…YWIV).

Its subcellular location is the cell membrane. This is an uncharacterized protein from Bacillus subtilis (strain 168).